The primary structure comprises 710 residues: ARM REPEAT PROTEIN INTERACTING WITH ABF2 (710 aa).

A disordered region spans residues 1–35; the sequence is MDQQPERREGRSFPERKGQKRKLEEGAAAVEDREI. 9 ARM repeats span residues 85–127, 138–185, 188–227, 230–269, 272–311, 314–353, 355–394, 429–468, and 470–509; these read EDLV…EKGS, PEYQ…NLAH, SSIKTRVRVEGGIPPLVELLEFSDSKVQRAAAGALRTLAF, DDNKNQIVECNALPTLILMLGSEDAAIHYEAVGVIGNLVH, PHIKKEVLTAGALQPVIGLLSSCCPESQREAALLLGQFAS, SDCKVHIVQRGAVRPLIEMLQSPDVQLKEMSAFALGRLAQ, AHNQAGIAHSGGLGPLLKLLDSRNGSLQHNAAFALYGLAD, LKRLEEKIHGRVLRHLLYLMRISEKSIQRRVALALAHLCS, and EDQRTIFIDDNGLELLLGLLGSLNTKQQLDGAAALYKLAN. A BTB domain is found at 541-608; the sequence is SDVTFLVEGR…IYTGSVDITN (68 aa).

Interacts with ABF2. Interacts with DUF7/AIP1. In terms of tissue distribution, detected in embryos and most of the vegetative and reproductive organs.

The protein resides in the nucleus. Its pathway is protein modification; protein ubiquitination. In terms of biological role, may act as a substrate-specific adapter of an E3 ubiquitin-protein ligase complex (CUL3-RBX1-BTB) which mediates the ubiquitination and subsequent proteasomal degradation of target proteins. Acts as a positive regulator of ABA response via the modulation of the transcriptional activity of ABF2, a transcription factor which controls ABA-dependent gene expression via the G-box-type ABA-responsive elements. Negative regulator of seed germination and young seedling growth. The protein is ARM REPEAT PROTEIN INTERACTING WITH ABF2 (ARIA) of Arabidopsis thaliana (Mouse-ear cress).